The primary structure comprises 159 residues: Putative UPF0479 protein YDR545C-A (159 aa).

The next 2 membrane-spanning stretches (helical) occupy residues 38 to 58 (IVFC…KVLQ) and 135 to 155 (VPMI…ISQH).

The protein belongs to the UPF0479 family.

It is found in the membrane. This Saccharomyces cerevisiae (strain ATCC 204508 / S288c) (Baker's yeast) protein is Putative UPF0479 protein YDR545C-A.